The primary structure comprises 142 residues: Large ribosomal subunit protein uL11 (142 aa).

It belongs to the universal ribosomal protein uL11 family. Part of the ribosomal stalk of the 50S ribosomal subunit. Interacts with L10 and the large rRNA to form the base of the stalk. L10 forms an elongated spine to which L12 dimers bind in a sequential fashion forming a multimeric L10(L12)X complex. One or more lysine residues are methylated.

In terms of biological role, forms part of the ribosomal stalk which helps the ribosome interact with GTP-bound translation factors. The protein is Large ribosomal subunit protein uL11 of Alcanivorax borkumensis (strain ATCC 700651 / DSM 11573 / NCIMB 13689 / SK2).